A 306-amino-acid polypeptide reads, in one-letter code: D-alanine--D-alanine ligase (306 aa).

Positions 102–300 (KIVVASVGVS…YGDIVQWMVE (199 aa)) constitute an ATP-grasp domain. ATP is bound at residue 128-183 (PMEPPYVIKPVCEGSSLGVIIVKENESVPSLNVVGSEWVYADTVIVEKYIPGRELT). 3 residues coordinate Mg(2+): D253, E267, and N269.

The protein belongs to the D-alanine--D-alanine ligase family. Mg(2+) serves as cofactor. The cofactor is Mn(2+).

The protein localises to the cytoplasm. The catalysed reaction is 2 D-alanine + ATP = D-alanyl-D-alanine + ADP + phosphate + H(+). Its pathway is cell wall biogenesis; peptidoglycan biosynthesis. In terms of biological role, cell wall formation. The polypeptide is D-alanine--D-alanine ligase (Bartonella henselae (strain ATCC 49882 / DSM 28221 / CCUG 30454 / Houston 1) (Rochalimaea henselae)).